We begin with the raw amino-acid sequence, 960 residues long: MSVCLTEEQKRKIEENRQRALARRAERLAAQQNTLKQTNNSHSTLFNIQKSTVEQGALFSGQRTNVTAACMAPLQQGSNNKYAFQKTSSGGSAASSLPGTAENKPQAGGNGPCDYKVPADPAQDFTSSKNLTGKYVAPKAHCVSSVPSFNDTPNPRQLNPACTTQEQEKPKNSSYSYSRPDSDTACDKFTAGPGPGPIRNTTAISKFYGANPGIKPALPVSNKTVSEVRDRGVTGSSVEAVPVKKASSSTRGRCVKHMEGRFRVEVGYSAELIALFKTIPSKAYDPATKMWNFGLEDYASLMSEVQRVQSVELKALEGMEGVQIAPPPTSGSGTNINALLAMCNNWQRPNATLRGRCILISRSRFEMEIGYHTEIIGLFKQMNTRNYDTKTRKWSFMLEDYQKLMESVRNIQQVEVEPLPRPVLQAFAPQFEKTTISLAEIEDVDLSHVDSKLIGNLMPFQRDGVNFAISREGRLLLADDMGLGKTIQAICIAAYYRKEWPLLVVAPSSVRFTWAEAFHRWLPSLNPESVNVIVTGRDSQSANLINIISFDLLGKMDKQIAANFKVIIIDESHFLKNVKTARCKAAMPLLKSAKRVMLLSGTPAMSRPAELYTQIAAVRPTFFPRFHDFGIRYCDAKQMPWGWDYSGSSNLNELKLLLEESIMIRRLKSEVLSQLPAKQRKMVVVAPEGITAKTKAALAAAAKEMAKGFKSKVQEKEALLLFYNRTAEAKIRSVLEYIIDLLESGREKFLVFAHHKLVLDNICEELGKKEVPYIRIDGNTSSADRQSLCHKFQFSEKSCVAVLSITAANMGLTLSSADLVVFAELFWNPGVLIQAEDRVHRIGQTSSVNIHYLVAKGTADDYLWPMIQEKIKVLGQAGLSEANFSETTESTDYFYKDPKQKTIYDLFQRSFSEQGAENDSDEALLLEACEEVDLGESTCGPTDYSGNACKRRKIDDYFAL.

Residues 5–41 (LTEEQKRKIEENRQRALARRAERLAAQQNTLKQTNNS) adopt a coiled-coil conformation. Disordered regions lie at residues 81-126 (KYAF…QDFT) and 145-182 (SVPSFNDTPNPRQLNPACTTQEQEKPKNSSYSYSRPDS). The span at 145–165 (SVPSFNDTPNPRQLNPACTTQ) shows a compositional bias: polar residues. HARP domains lie at 246-317 (ASSS…KALE) and 349-420 (PNAT…EPLP). The Helicase ATP-binding domain occupies 466-621 (NFAISREGRL…YTQIAAVRPT (156 aa)). An ATP-binding site is contributed by 479 to 486 (DDMGLGKT). The DESH box signature appears at 570–573 (DESH). The short motif at 665-682 (RRLKSEVLSQLPAKQRKM) is the Nuclear localization signal element. A Helicase C-terminal domain is found at 737–890 (YIIDLLESGR…EANFSETTES (154 aa)).

Belongs to the SNF2/RAD54 helicase family. SMARCAL1 subfamily.

The protein resides in the nucleus. The catalysed reaction is ATP + H2O = ADP + phosphate + H(+). Its function is as follows. ATP-dependent annealing helicase that catalyzes the rewinding of the stably unwound DNA. Rewinds single-stranded DNA bubbles that are stably bound by replication protein A (RPA). Acts throughout the genome to reanneal stably unwound DNA, performing the opposite reaction of many enzymes, such as helicases and polymerases, that unwind DNA. The sequence is that of SWI/SNF-related matrix-associated actin-dependent regulator of chromatin subfamily A-like protein 1 (smarcal1) from Xenopus laevis (African clawed frog).